The following is a 372-amino-acid chain: Queuine tRNA-ribosyltransferase (372 aa).

Asp89 functions as the Proton acceptor in the catalytic mechanism. Substrate contacts are provided by residues 89-93, Asp161, and Gly232; that span reads DSGGF. An RNA binding region spans residues 262 to 268; sequence GIGDLPS. The Nucleophile role is filled by Asp281. The segment at 286–290 is RNA binding; important for wobble base 34 recognition; it reads TKAAR. Residues Cys319, Cys321, Cys324, and His351 each contribute to the Zn(2+) site.

Belongs to the queuine tRNA-ribosyltransferase family. In terms of assembly, homodimer. Within each dimer, one monomer is responsible for RNA recognition and catalysis, while the other monomer binds to the replacement base PreQ1. Zn(2+) is required as a cofactor.

It catalyses the reaction 7-aminomethyl-7-carbaguanine + guanosine(34) in tRNA = 7-aminomethyl-7-carbaguanosine(34) in tRNA + guanine. The protein operates within tRNA modification; tRNA-queuosine biosynthesis. In terms of biological role, catalyzes the base-exchange of a guanine (G) residue with the queuine precursor 7-aminomethyl-7-deazaguanine (PreQ1) at position 34 (anticodon wobble position) in tRNAs with GU(N) anticodons (tRNA-Asp, -Asn, -His and -Tyr). Catalysis occurs through a double-displacement mechanism. The nucleophile active site attacks the C1' of nucleotide 34 to detach the guanine base from the RNA, forming a covalent enzyme-RNA intermediate. The proton acceptor active site deprotonates the incoming PreQ1, allowing a nucleophilic attack on the C1' of the ribose to form the product. After dissociation, two additional enzymatic reactions on the tRNA convert PreQ1 to queuine (Q), resulting in the hypermodified nucleoside queuosine (7-(((4,5-cis-dihydroxy-2-cyclopenten-1-yl)amino)methyl)-7-deazaguanosine). The sequence is that of Queuine tRNA-ribosyltransferase from Chlamydia caviae (strain ATCC VR-813 / DSM 19441 / 03DC25 / GPIC) (Chlamydophila caviae).